The primary structure comprises 250 residues: 5-oxoprolinase subunit A 2 (250 aa).

The protein belongs to the LamB/PxpA family. In terms of assembly, forms a complex composed of PxpA, PxpB and PxpC.

The enzyme catalyses 5-oxo-L-proline + ATP + 2 H2O = L-glutamate + ADP + phosphate + H(+). Catalyzes the cleavage of 5-oxoproline to form L-glutamate coupled to the hydrolysis of ATP to ADP and inorganic phosphate. In Bordetella bronchiseptica (strain ATCC BAA-588 / NCTC 13252 / RB50) (Alcaligenes bronchisepticus), this protein is 5-oxoprolinase subunit A 2.